The sequence spans 793 residues: Signal transducer and activator of transcription 5A (793 aa).

The residue at position 90 (tyrosine 90) is a Phosphotyrosine. Position 128 is a phosphoserine (serine 128). Positions 589–686 (WNDGAILGFV…EVFAKYYTPV (98 aa)) constitute an SH2 domain. Position 682 is a phosphotyrosine (tyrosine 682). Tyrosine 694 carries the post-translational modification Phosphotyrosine; by JAK2. The interval 772–793 (DSLDPRLSPPAGLFTSARSSLS) is disordered. Serine 779 carries the phosphoserine modification.

The protein belongs to the transcription factor STAT family. As to quaternary structure, forms a homodimer or a heterodimer with a related family member. Binds NR3C1. Interacts with NCOA1 and SOCS7. Interacts with ERBB4. Interacts with EBF4. In terms of processing, ISGylated. Tyrosine phosphorylated in response to KITLG/SCF, IL2, IL3, IL7, IL15, CSF2/GMCSF, GH1, PRL, EPO and THPO. Activated KIT promotes phosphorylation on tyrosine residues and subsequent translocation to the nucleus. Tyrosine phosphorylated in response to constitutively activated FGFR1, FGFR2, FGFR3 and FGFR4. Tyrosine phosphorylation is required for DNA-binding activity and dimerization. Serine phosphorylation is also required for maximal transcriptional activity. Tyrosine phosphorylated in response to signaling via activated FLT3; wild-type FLT3 results in much weaker phosphorylation than constitutively activated mutant FLT3. Alternatively, can be phosphorylated by JAK2 at Tyr-694. As to expression, expressed in heart, lung, and weakly in muscle.

The protein resides in the cytoplasm. It localises to the nucleus. Functionally, carries out a dual function: signal transduction and activation of transcription. Mediates cellular responses to the cytokine KITLG/SCF and other growth factors. May mediate cellular responses to activated FGFR1, FGFR2, FGFR3 and FGFR4. Binds to the GAS element and activates PRL-induced transcription. Regulates the expression of milk proteins during lactation. The sequence is that of Signal transducer and activator of transcription 5A (Stat5a) from Rattus norvegicus (Rat).